The sequence spans 354 residues: MKVAILGAGCYRTHAASGITNFSRAAQVAKEVGIPEITMTHSTITMGAELLHLIPEITEVVVSDPCFAEEPGIVVLDQFDYKTVMEAHLAGDAEKVMPEIREAVKAKAKETPKPPKGCIHFVHPETIGLKVTASDVEAVKNADIVITWLPKGGSQPAIIEKFVGAIKKGAIVTHACTIPTPKFAKIFKDMGRDDLNIIAYHPGAVPEMKGQAFLSEGLADAEKVEEFYCMAKTARGEAFKMPANLISPVCDMGSAVTAPVYAGILAYRDAVTQILGAPADFAQMMADEAITQLLELMRSEGIKNMEDKLNPKALTGTADSMCFGPLADILPTSLKVLEKHTNENKCECSCSIKP.

This sequence belongs to the HMD family.

It catalyses the reaction 5,10-methenyl-5,6,7,8-tetrahydromethanopterin + H2 = 5,10-methylenetetrahydromethanopterin + H(+). Its pathway is one-carbon metabolism; methanogenesis from CO(2); 5,10-methylene-5,6,7,8-tetrahydromethanopterin from 5,10-methenyl-5,6,7,8-tetrahydromethanopterin (hydrogen route): step 1/1. In terms of biological role, catalyzes the reversible reduction of methenyl-H(4)MPT(+) to methylene-H(4)MPT. In Methanococcus maripaludis (strain C5 / ATCC BAA-1333), this protein is 5,10-methenyltetrahydromethanopterin hydrogenase.